The chain runs to 262 residues: MVLIRVLANLLILQLSYAQKSSELVIGGDECNIDEHRFLVALYHSRSKTFLCGGTLLNEEWVLTAAHCNRVFMYIRLGMHNKNVKFDDEQIRYAKEKYFFRCHNNFTRWDKDIMLIRLNKPVSYSEHIAPLSLPFSPPSVGSVCRAMGWGQTTSPQETLPDVPHCANINLLDYEVCRTAHPQFRLPATSRTLCAGVLEGGIDTCNRDSGGPLICNGQFQGIVFWGPDPCAQPDKPGLYTKVFDHLDWIQSIIAGEKTVNCPP.

An N-terminal signal peptide occupies residues 1-18; the sequence is MVLIRVLANLLILQLSYA. Positions 19–24 are excised as a propeptide; that stretch reads QKSSEL. One can recognise a Peptidase S1 domain in the interval 25-253; that stretch reads VIGGDECNID…HLDWIQSIIA (229 aa). Cystine bridges form between C31-C165, C52-C68, C144-C214, C176-C193, and C204-C229. H67 functions as the Charge relay system in the catalytic mechanism. Residue N105 is glycosylated (N-linked (GlcNAc...) asparagine). D112 serves as the catalytic Charge relay system. The active-site Charge relay system is S208.

It belongs to the peptidase S1 family. Snake venom subfamily. As to quaternary structure, monomer. In terms of tissue distribution, expressed by the venom gland.

The protein resides in the secreted. Functionally, snake venom serine protease that may act in the hemostasis system of the prey. This Crotalus adamanteus (Eastern diamondback rattlesnake) protein is Snake venom serine proteinase 9.